Consider the following 176-residue polypeptide: Inner membrane-spanning protein YciB (176 aa).

The next 6 helical transmembrane spans lie at 3–23, 24–44, 49–69, 72–92, 121–141, and 149–169; these read FLFDLFPIILFFVAFKVWGIF, TATAVAIVATLAQVAWVAFRH, TMLWVSLGVIVVFGGATLVLH, KFIQWKPTVLYWLFAIGLLAA, VAWALFFAVLGVANLYVVHNF, and FKLFGTTGAMVVFIILQSLWL.

The protein belongs to the YciB family.

The protein localises to the cell inner membrane. Plays a role in cell envelope biogenesis, maintenance of cell envelope integrity and membrane homeostasis. This is Inner membrane-spanning protein YciB from Burkholderia orbicola (strain MC0-3).